Consider the following 520-residue polypeptide: Nonsense-mediated mRNA decay factor SMG9 (520 aa).

2 disordered regions span residues 1 to 94 (MSES…PAPL) and 107 to 143 (GKGPVAATGASTPEGTAPPPPTAPAPPKGEKEGQRPT). The residue at position 2 (Ser2) is an N-acetylserine. Phosphoserine occurs at positions 2, 4, 7, 32, and 53. Basic and acidic residues predominate over residues 36-53 (GRERDYIAPWERERRDGS). Positions 78–94 (QPPPSTAPAAPPAPAPL) are enriched in pro residues. Residues 112–121 (AATGASTPEG) are compositionally biased toward low complexity. The span at 122–133 (TAPPPPTAPAPP) shows a compositional bias: pro residues. Ser451 is subject to Phosphoserine.

Belongs to the SMG9 family. In terms of assembly, self-associates to form homodimers and forms heterodimers with SMG8; these assembly forms may represent SMG1C intermediate forms. Component of the SMG1C complex composed of SMG1, SMG8 and SMG9. Interacts with DHX34; the interaction is RNA-independent. In terms of processing, phosphorylated by SMG1.

Functionally, involved in nonsense-mediated decay (NMD) of mRNAs containing premature stop codons. Is recruited by release factors to stalled ribosomes together with SMG1 and SMG8 (forming the SMG1C protein kinase complex) and, in the SMG1C complex, is required for the efficient association between SMG1 and SMG8. Plays a role in brain, heart, and eye development. The chain is Nonsense-mediated mRNA decay factor SMG9 from Rattus norvegicus (Rat).